The following is a 179-amino-acid chain: 3-hydroxyanthranilate 3,4-dioxygenase 2 (179 aa).

Arginine 44 contacts O2. The Fe cation site is built by histidine 48, glutamate 60, and histidine 99. Glutamate 60 is a substrate binding site. Substrate contacts are provided by arginine 103 and glutamate 113.

Belongs to the 3-HAO family. Fe(2+) is required as a cofactor.

It is found in the cytoplasm. It catalyses the reaction 3-hydroxyanthranilate + O2 = (2Z,4Z)-2-amino-3-carboxymuconate 6-semialdehyde. It participates in cofactor biosynthesis; NAD(+) biosynthesis; quinolinate from L-kynurenine: step 3/3. Its function is as follows. Catalyzes the oxidative ring opening of 3-hydroxyanthranilate to 2-amino-3-carboxymuconate semialdehyde, which spontaneously cyclizes to quinolinate. In Aspergillus oryzae (strain ATCC 42149 / RIB 40) (Yellow koji mold), this protein is 3-hydroxyanthranilate 3,4-dioxygenase 2 (bna1-2).